We begin with the raw amino-acid sequence, 186 residues long: ATP synthase subunit delta (186 aa).

The protein belongs to the ATPase delta chain family. As to quaternary structure, F-type ATPases have 2 components, F(1) - the catalytic core - and F(0) - the membrane proton channel. F(1) has five subunits: alpha(3), beta(3), gamma(1), delta(1), epsilon(1). F(0) has three main subunits: a(1), b(2) and c(10-14). The alpha and beta chains form an alternating ring which encloses part of the gamma chain. F(1) is attached to F(0) by a central stalk formed by the gamma and epsilon chains, while a peripheral stalk is formed by the delta and b chains.

The protein resides in the cell inner membrane. In terms of biological role, f(1)F(0) ATP synthase produces ATP from ADP in the presence of a proton or sodium gradient. F-type ATPases consist of two structural domains, F(1) containing the extramembraneous catalytic core and F(0) containing the membrane proton channel, linked together by a central stalk and a peripheral stalk. During catalysis, ATP synthesis in the catalytic domain of F(1) is coupled via a rotary mechanism of the central stalk subunits to proton translocation. Functionally, this protein is part of the stalk that links CF(0) to CF(1). It either transmits conformational changes from CF(0) to CF(1) or is implicated in proton conduction. This Bacteroides fragilis (strain ATCC 25285 / DSM 2151 / CCUG 4856 / JCM 11019 / LMG 10263 / NCTC 9343 / Onslow / VPI 2553 / EN-2) protein is ATP synthase subunit delta.